The primary structure comprises 334 residues: Holliday junction branch migration complex subunit RuvB (334 aa).

The large ATPase domain (RuvB-L) stretch occupies residues 4–184 (ADRLIQPQDL…FGIPLRLEFY (181 aa)). Residues R24, G65, K68, T69, T70, 131 to 133 (EDY), R174, Y184, and R221 each bind ATP. Mg(2+) is bound at residue T69. The small ATPAse domain (RuvB-S) stretch occupies residues 185-255 (NVRDLSSIVA…VAQSALDLLD (71 aa)). Positions 258-334 (SEGFDYMDRK…YSHFDLIKPD (77 aa)) are head domain (RuvB-H). R294, R313, and R318 together coordinate DNA.

It belongs to the RuvB family. In terms of assembly, homohexamer. Forms an RuvA(8)-RuvB(12)-Holliday junction (HJ) complex. HJ DNA is sandwiched between 2 RuvA tetramers; dsDNA enters through RuvA and exits via RuvB. An RuvB hexamer assembles on each DNA strand where it exits the tetramer. Each RuvB hexamer is contacted by two RuvA subunits (via domain III) on 2 adjacent RuvB subunits; this complex drives branch migration. In the full resolvosome a probable DNA-RuvA(4)-RuvB(12)-RuvC(2) complex forms which resolves the HJ.

The protein localises to the cytoplasm. It catalyses the reaction ATP + H2O = ADP + phosphate + H(+). In terms of biological role, the RuvA-RuvB-RuvC complex processes Holliday junction (HJ) DNA during genetic recombination and DNA repair, while the RuvA-RuvB complex plays an important role in the rescue of blocked DNA replication forks via replication fork reversal (RFR). RuvA specifically binds to HJ cruciform DNA, conferring on it an open structure. The RuvB hexamer acts as an ATP-dependent pump, pulling dsDNA into and through the RuvAB complex. RuvB forms 2 homohexamers on either side of HJ DNA bound by 1 or 2 RuvA tetramers; 4 subunits per hexamer contact DNA at a time. Coordinated motions by a converter formed by DNA-disengaged RuvB subunits stimulates ATP hydrolysis and nucleotide exchange. Immobilization of the converter enables RuvB to convert the ATP-contained energy into a lever motion, pulling 2 nucleotides of DNA out of the RuvA tetramer per ATP hydrolyzed, thus driving DNA branch migration. The RuvB motors rotate together with the DNA substrate, which together with the progressing nucleotide cycle form the mechanistic basis for DNA recombination by continuous HJ branch migration. Branch migration allows RuvC to scan DNA until it finds its consensus sequence, where it cleaves and resolves cruciform DNA. The sequence is that of Holliday junction branch migration complex subunit RuvB from Shewanella amazonensis (strain ATCC BAA-1098 / SB2B).